The chain runs to 192 residues: Xanthine phosphoribosyltransferase (192 aa).

Residues L20 and N27 each contribute to the xanthine site. Position 128–132 (128–132) interacts with 5-phospho-alpha-D-ribose 1-diphosphate; sequence ANGDA. Position 156 (K156) interacts with xanthine.

Belongs to the purine/pyrimidine phosphoribosyltransferase family. Xpt subfamily. Homodimer.

The protein localises to the cytoplasm. The catalysed reaction is XMP + diphosphate = xanthine + 5-phospho-alpha-D-ribose 1-diphosphate. It participates in purine metabolism; XMP biosynthesis via salvage pathway; XMP from xanthine: step 1/1. In terms of biological role, converts the preformed base xanthine, a product of nucleic acid breakdown, to xanthosine 5'-monophosphate (XMP), so it can be reused for RNA or DNA synthesis. This Staphylococcus aureus (strain bovine RF122 / ET3-1) protein is Xanthine phosphoribosyltransferase.